Consider the following 379-residue polypeptide: Muconate cycloisomerase 1-1 (379 aa).

The active site involves lysine 169. Residues aspartate 198, glutamate 224, and aspartate 247 each contribute to the Mn(2+) site.

The protein belongs to the mandelate racemase/muconate lactonizing enzyme family. Homooctamer. Mn(2+) is required as a cofactor.

It carries out the reaction (S)-muconolactone = cis,cis-muconate + H(+). Its pathway is aromatic compound metabolism; beta-ketoadipate pathway; 5-oxo-4,5-dihydro-2-furylacetate from catechol: step 2/3. Functionally, catalyzes a syn cycloisomerization. The chain is Muconate cycloisomerase 1-1 (catB1) from Acinetobacter lwoffii.